The chain runs to 324 residues: tRNA U34 carboxymethyltransferase (324 aa).

Carboxy-S-adenosyl-L-methionine contacts are provided by residues K91, W105, K110, G130, 152–154 (DPS), 181–182 (IE), M196, Y200, and R315.

Belongs to the class I-like SAM-binding methyltransferase superfamily. CmoB family. As to quaternary structure, homotetramer.

It catalyses the reaction carboxy-S-adenosyl-L-methionine + 5-hydroxyuridine(34) in tRNA = 5-carboxymethoxyuridine(34) in tRNA + S-adenosyl-L-homocysteine + H(+). Catalyzes carboxymethyl transfer from carboxy-S-adenosyl-L-methionine (Cx-SAM) to 5-hydroxyuridine (ho5U) to form 5-carboxymethoxyuridine (cmo5U) at position 34 in tRNAs. This Photobacterium profundum (strain SS9) protein is tRNA U34 carboxymethyltransferase.